The following is a 491-amino-acid chain: Aspartyl/glutamyl-tRNA(Asn/Gln) amidotransferase subunit B (491 aa).

Belongs to the GatB/GatE family. GatB subfamily. As to quaternary structure, heterotrimer of A, B and C subunits.

It catalyses the reaction L-glutamyl-tRNA(Gln) + L-glutamine + ATP + H2O = L-glutaminyl-tRNA(Gln) + L-glutamate + ADP + phosphate + H(+). It carries out the reaction L-aspartyl-tRNA(Asn) + L-glutamine + ATP + H2O = L-asparaginyl-tRNA(Asn) + L-glutamate + ADP + phosphate + 2 H(+). Its function is as follows. Allows the formation of correctly charged Asn-tRNA(Asn) or Gln-tRNA(Gln) through the transamidation of misacylated Asp-tRNA(Asn) or Glu-tRNA(Gln) in organisms which lack either or both of asparaginyl-tRNA or glutaminyl-tRNA synthetases. The reaction takes place in the presence of glutamine and ATP through an activated phospho-Asp-tRNA(Asn) or phospho-Glu-tRNA(Gln). This Burkholderia lata (strain ATCC 17760 / DSM 23089 / LMG 22485 / NCIMB 9086 / R18194 / 383) protein is Aspartyl/glutamyl-tRNA(Asn/Gln) amidotransferase subunit B.